We begin with the raw amino-acid sequence, 265 residues long: Isoprenyl transferase (265 aa).

The active site involves Asp-35. Asp-35 contributes to the Mg(2+) binding site. Residues 36–39 (GNGR), Trp-40, Arg-48, His-52, and 80–82 (SIE) each bind substrate. The Proton acceptor role is filled by Asn-83. Substrate-binding positions include Trp-84, Arg-86, Arg-203, and 209 to 211 (RIS). Glu-222 is a Mg(2+) binding site.

This sequence belongs to the UPP synthase family. In terms of assembly, homodimer. Mg(2+) is required as a cofactor.

Catalyzes the condensation of isopentenyl diphosphate (IPP) with allylic pyrophosphates generating different type of terpenoids. The sequence is that of Isoprenyl transferase from Chlorobaculum tepidum (strain ATCC 49652 / DSM 12025 / NBRC 103806 / TLS) (Chlorobium tepidum).